Here is a 1217-residue protein sequence, read N- to C-terminus: Nuclear matrix constituent protein 1 (1217 aa).

The segment covering 1 to 14 (MLTPQRSAWSLKSK) has biased composition (polar residues). The tract at residues 1 to 45 (MLTPQRSAWSLKSKVSSEKPRSKGKGITKNLDSAATPFPPLGLLN) is disordered. Residues 159–746 (VTDLEKALRE…KNQRAEFIKE (588 aa)) are a coiled coil. A compositionally biased stretch (low complexity) spans 892–904 (SEDAAANDNNPAA). Disordered regions lie at residues 892–969 (SEDA…VVDD), 981–1057 (EEAK…VQAP), 1087–1117 (VQTK…HKVT), and 1152–1217 (ISEM…FFTT). Positions 947–960 (STRRGRGGKTVRRT) are enriched in basic residues. Composition is skewed to polar residues over residues 986-1007 (SSQQ…TSNT) and 1087-1103 (VQTK…NQIS). Low complexity predominate over residues 1173 to 1186 (EEPATPSSGSSTSG). The segment covering 1189-1200 (GNDDDMDDDDEE) has biased composition (acidic residues).

The protein belongs to the CRWN family.

It localises to the nucleus matrix. The protein resides in the nucleus lamina. Its function is as follows. Architectural component of nuclear structure that plays different roles in controlling nuclear size and morphology. Involved in the organization of multimeric complexes in the peripheral nucleoskeleton. The chain is Nuclear matrix constituent protein 1 from Allium cepa (Onion).